The primary structure comprises 57 residues: UPF0509 protein YciZ (57 aa).

Belongs to the UPF0509 family.

The polypeptide is UPF0509 protein YciZ (yciZ) (Escherichia coli O157:H7).